Reading from the N-terminus, the 81-residue chain is MAVKIRLRRMGAHKAPFYRVVVADSRSPRDGRFIEEIGYYNPIAKPEAEVKIDAEKAAKWLGNGAQPTDIVKKLFNQAGIK.

This sequence belongs to the bacterial ribosomal protein bS16 family.

The chain is Small ribosomal subunit protein bS16 from Clostridium perfringens (strain ATCC 13124 / DSM 756 / JCM 1290 / NCIMB 6125 / NCTC 8237 / Type A).